A 306-amino-acid polypeptide reads, in one-letter code: D-alanine--D-alanine ligase (306 aa).

The ATP-grasp domain maps to 102 to 300 (KIVVASVGVS…YGDIVQWMVE (199 aa)). Residue 128–183 (PMEPPYVIKPVCEGSSLGVIIVKENESVPSLNVVGSEWVYADTVIVEKYIPGRELT) participates in ATP binding. 3 residues coordinate Mg(2+): D253, E267, and N269.

The protein belongs to the D-alanine--D-alanine ligase family. The cofactor is Mg(2+). Mn(2+) is required as a cofactor.

It is found in the cytoplasm. It carries out the reaction 2 D-alanine + ATP = D-alanyl-D-alanine + ADP + phosphate + H(+). The protein operates within cell wall biogenesis; peptidoglycan biosynthesis. In terms of biological role, cell wall formation. This is D-alanine--D-alanine ligase from Bartonella henselae (strain ATCC 49882 / DSM 28221 / CCUG 30454 / Houston 1) (Rochalimaea henselae).